The sequence spans 294 residues: Nucleotide-binding protein NT01CX_1284 (294 aa).

8–15 (GLSGAGKS) serves as a coordination point for ATP. 59–62 (DIRG) serves as a coordination point for GTP.

It belongs to the RapZ-like family.

Displays ATPase and GTPase activities. The protein is Nucleotide-binding protein NT01CX_1284 of Clostridium novyi (strain NT).